The primary structure comprises 381 residues: MAAFGRQVLDWHRLIPLTWACMARQTPHLGEQRRTTASLLRKLTTASNGGVIEELSCVRSNNYVQEPECRRNLVQCLLEKQGTPVVQGSLELERVMSSLLDMGFSNAHINELLSVRRGASLQQLLDIISEFILLGLNPEPVCVVLKKSPQLLKLPIMQMRKRSSYLQKLGLGEGKLKRVLYCCPEIFTMRQQDINDTVRLLKEKCLFTVQQVTKILHSCPSVLREDLGQLEYKFQYAYFRMGIKHPDIVKSEYLQYSLTKIKQRHIYLERLGRYQTPDKKGQTQIPNPLLKDILRVSEAEFLARTACTSVEEFQVFKKLLAREEEESESSTSDDKRASLDEDEDDDDEEDNDEDDNDEDDDDEDDDEAEDNDEDEDDDEEE.

The transit peptide at 1 to 42 (MAAFGRQVLDWHRLIPLTWACMARQTPHLGEQRRTTASLLRK) directs the protein to the mitochondrion. MTERF repeat units lie at residues 142–172 (CVVL…LGLG), 177–204 (KRVL…LKEK), 209–239 (VQQV…YAYF), 245–270 (HPDI…YLER), and 290–318 (LKDI…VFKK). The tract at residues 310–327 (VEEFQVFKKLLAREEEES) is dimerization with NSUN4. Positions 322 to 381 (REEEESESSTSDDKRASLDEDEDDDDEEDNDEDDNDEDDDDEDDDEAEDNDEDEDDDEEE) are disordered. Acidic residues predominate over residues 340–381 (DEDEDDDDEEDNDEDDNDEDDDDEDDDEAEDNDEDEDDDEEE).

Belongs to the mTERF family. In terms of assembly, heterodimer with NSUN4; this interaction may be required for NSUN4 recruitment to the mitochondrial large ribosomal subunit. Post-translationally, the mature mitochondrial protein exists in 2 forms differing at the level of their N-terminus, one is starting at residue 43 and the other at residue 48.

It is found in the mitochondrion. Functionally, regulator of mitochondrial ribosome biogenesis and translation. Binds to mitochondrial ribosomal RNAs 16S, 12S and 7S and targets NSUN4 RNA methyltransferase to the mitochondrial large ribosomal subunit (39S). In Homo sapiens (Human), this protein is Transcription termination factor 4, mitochondrial (MTERF4).